Consider the following 68-residue polypeptide: Neuronal regeneration-related protein (68 aa).

Interacts with FLNA. Interacts with the latency-associated peptides (LAP) of TGFB1 and TGFB2; the interaction results in a decrease in TGFB autoinduction. Phosphorylated on Ser-59. Phosphorylation decreases stability and activity.

Its subcellular location is the cytoplasm. In terms of biological role, may have roles in neural function. Ectopic expression promotes axonal regeneration. Also augments motility of gliomas. May also have roles in cellular differentiation. Induces differentiation of fibroblast into myofibroblast and myofibroblast ameboid migration. Increases retinoic-acid regulation of lipid-droplet biogenesis. Down-regulates the expression of TGFB1 and TGFB2 but not of TGFB3. May play a role in the regulation of alveolar generation. This is Neuronal regeneration-related protein (Nrep) from Rattus norvegicus (Rat).